We begin with the raw amino-acid sequence, 317 residues long: Type II methyltransferase M.NgoBI (317 aa).

In terms of domain architecture, SAM-dependent MTase C5-type spans 2–302; it reads YKTIDLFSGI…KICSLLFPAR (301 aa). The active site involves C71.

The protein belongs to the class I-like SAM-binding methyltransferase superfamily. C5-methyltransferase family.

It carries out the reaction a 2'-deoxycytidine in DNA + S-adenosyl-L-methionine = a 5-methyl-2'-deoxycytidine in DNA + S-adenosyl-L-homocysteine + H(+). Functionally, a methylase, recognizes the double-stranded sequence 5'-RGCGCY-3', methylates C-5 on both strands, and protects the DNA from cleavage by the NgoBI endonuclease. This is Type II methyltransferase M.NgoBI (ngoBIM) from Neisseria gonorrhoeae.